We begin with the raw amino-acid sequence, 44 residues long: U9-ctenitoxin-Co1a (44 aa).

Cystine bridges form between Cys3–Cys17, Cys10–Cys23, Cys16–Cys33, and Cys25–Cys31.

As to expression, expressed by the venom gland.

It is found in the secreted. Functionally, insecticidal neurotoxin that reversibly inhibits the N-methyl-D-aspartate (NMDA)-subtype of ionotropic glutamate receptor (GRIN) and inhibits inactivation of insect sodium channels (Nav). In vivo, is highly toxic to insects. This is U9-ctenitoxin-Co1a from Ctenus ornatus (Brazilian spider).